We begin with the raw amino-acid sequence, 763 residues long: Actin filament-associated protein 1-like 1 (763 aa).

The segment at 83–137 (LQDMPEDEAESCKAASPEPAKSPSLRHTADLPPPLPNRPPPEDYYEEALPLGPGK) is disordered. 3 positions are modified to phosphoserine: S98, S104, and S153. The segment at 169–210 (TRMNGELKNSYNDSDAMSSSYESYDEEEEEGKGPQPTHQWPS) is disordered. A compositionally biased stretch (polar residues) spans 175-185 (LKNSYNDSDAM). The 97-residue stretch at 220-316 (DCRICAFLLR…WLKVIREVSK (97 aa)) folds into the PH 1 domain. 2 positions are modified to phosphoserine: S329 and S343. Positions 343 to 380 (SQEKQTSDSDSLGMGDSCSTLGREHGKGKKSSLSELKG) are disordered. One can recognise a PH 2 domain in the interval 413 to 507 (EVPCCGYLNV…WLGLLLVEMG (95 aa)). Residue Y552 is modified to Phosphotyrosine. Residues 561–604 (QDEEPERPPGAQVKRHASTCSEKSHRVDPQVKVKRHASSAHQYK) form a disordered region. Residues 582–591 (EKSHRVDPQV) show a composition bias toward basic and acidic residues. Positions 606-694 (GKNRAEEDAR…LVTVKERLQQ (89 aa)) form a coiled coil. Residues 712-724 (SGETANKPQNNVP) show a composition bias toward polar residues. The disordered stretch occupies residues 712–763 (SGETANKPQNNVPEQPLPVNCVSELRKRSPSIINSNQGRVLQKAKEWEMKKT). S742 is subject to Phosphoserine. The segment covering 754 to 763 (KAKEWEMKKT) has biased composition (basic and acidic residues).

As to quaternary structure, interacts with CTTN.

The protein localises to the cytoplasm. The protein resides in the cell projection. It localises to the podosome. It is found in the invadopodium. Its subcellular location is the cytoskeleton. The protein localises to the stress fiber. Its function is as follows. May be involved in podosome and invadosome formation. This is Actin filament-associated protein 1-like 1 (AFAP1L1) from Bos taurus (Bovine).